A 233-amino-acid polypeptide reads, in one-letter code: Purine nucleoside phosphorylase DeoD-type (233 aa).

An a purine D-ribonucleoside-binding site is contributed by H4. Residues G20, R24, R43, and 87-90 (RIGT) each bind phosphate. Residues 179-181 (EME) and 203-204 (SD) contribute to the a purine D-ribonucleoside site. Catalysis depends on D204, which acts as the Proton donor.

The protein belongs to the PNP/UDP phosphorylase family. As to quaternary structure, homohexamer; trimer of homodimers.

The catalysed reaction is a purine D-ribonucleoside + phosphate = a purine nucleobase + alpha-D-ribose 1-phosphate. It carries out the reaction a purine 2'-deoxy-D-ribonucleoside + phosphate = a purine nucleobase + 2-deoxy-alpha-D-ribose 1-phosphate. Functionally, catalyzes the reversible phosphorolytic breakdown of the N-glycosidic bond in the beta-(deoxy)ribonucleoside molecules, with the formation of the corresponding free purine bases and pentose-1-phosphate. This is Purine nucleoside phosphorylase DeoD-type from Thermoanaerobacter pseudethanolicus (strain ATCC 33223 / 39E) (Clostridium thermohydrosulfuricum).